A 181-amino-acid polypeptide reads, in one-letter code: 6,7-dimethyl-8-ribityllumazine synthase (181 aa).

Residues F23, 61 to 63 (SFE), and 85 to 87 (AVI) contribute to the 5-amino-6-(D-ribitylamino)uracil site. Position 90 to 91 (90 to 91 (QT)) interacts with (2S)-2-hydroxy-3-oxobutyl phosphate. H93 (proton donor) is an active-site residue. F118 is a binding site for 5-amino-6-(D-ribitylamino)uracil. Residue R132 coordinates (2S)-2-hydroxy-3-oxobutyl phosphate.

The protein belongs to the DMRL synthase family.

The enzyme catalyses (2S)-2-hydroxy-3-oxobutyl phosphate + 5-amino-6-(D-ribitylamino)uracil = 6,7-dimethyl-8-(1-D-ribityl)lumazine + phosphate + 2 H2O + H(+). It functions in the pathway cofactor biosynthesis; riboflavin biosynthesis; riboflavin from 2-hydroxy-3-oxobutyl phosphate and 5-amino-6-(D-ribitylamino)uracil: step 1/2. Functionally, catalyzes the formation of 6,7-dimethyl-8-ribityllumazine by condensation of 5-amino-6-(D-ribitylamino)uracil with 3,4-dihydroxy-2-butanone 4-phosphate. This is the penultimate step in the biosynthesis of riboflavin. This is 6,7-dimethyl-8-ribityllumazine synthase from Synechococcus elongatus (strain ATCC 33912 / PCC 7942 / FACHB-805) (Anacystis nidulans R2).